The primary structure comprises 243 residues: Pyridoxine 5'-phosphate synthase (243 aa).

A 3-amino-2-oxopropyl phosphate-binding site is contributed by Asn-7. 9 to 10 (DH) lines the 1-deoxy-D-xylulose 5-phosphate pocket. Arg-18 is a 3-amino-2-oxopropyl phosphate binding site. The Proton acceptor role is filled by His-43. Arg-45 and His-50 together coordinate 1-deoxy-D-xylulose 5-phosphate. The Proton acceptor role is filled by Glu-70. 1-deoxy-D-xylulose 5-phosphate is bound at residue Thr-100. His-192 serves as the catalytic Proton donor. 3-amino-2-oxopropyl phosphate contacts are provided by residues Gly-193 and 215-216 (GF).

Belongs to the PNP synthase family. In terms of assembly, homooctamer; tetramer of dimers.

The protein localises to the cytoplasm. The catalysed reaction is 3-amino-2-oxopropyl phosphate + 1-deoxy-D-xylulose 5-phosphate = pyridoxine 5'-phosphate + phosphate + 2 H2O + H(+). Its pathway is cofactor biosynthesis; pyridoxine 5'-phosphate biosynthesis; pyridoxine 5'-phosphate from D-erythrose 4-phosphate: step 5/5. Functionally, catalyzes the complicated ring closure reaction between the two acyclic compounds 1-deoxy-D-xylulose-5-phosphate (DXP) and 3-amino-2-oxopropyl phosphate (1-amino-acetone-3-phosphate or AAP) to form pyridoxine 5'-phosphate (PNP) and inorganic phosphate. This is Pyridoxine 5'-phosphate synthase from Salinibacter ruber (strain DSM 13855 / M31).